We begin with the raw amino-acid sequence, 427 residues long: Serine hydroxymethyltransferase (427 aa).

Position 120–122 (120–122) interacts with (6S)-5,6,7,8-tetrahydrofolate; sequence GHI. At K226 the chain carries N6-(pyridoxal phosphate)lysine.

This sequence belongs to the SHMT family. Homodimer. Requires pyridoxal 5'-phosphate as cofactor.

Its subcellular location is the cytoplasm. The protein operates within amino-acid biosynthesis; glycine biosynthesis; glycine from L-serine: step 1/1. In terms of biological role, catalyzes the reversible interconversion of serine and glycine with a modified folate serving as the one-carbon carrier. Also exhibits a pteridine-independent aldolase activity toward beta-hydroxyamino acids, producing glycine and aldehydes, via a retro-aldol mechanism. In Pyrococcus horikoshii (strain ATCC 700860 / DSM 12428 / JCM 9974 / NBRC 100139 / OT-3), this protein is Serine hydroxymethyltransferase.